Here is a 434-residue protein sequence, read N- to C-terminus: Serine--tRNA ligase (434 aa).

An L-serine-binding site is contributed by 239 to 241 (TAE). 270–272 (RSE) is an ATP binding site. Glu293 contacts L-serine. 357 to 360 (EISS) is an ATP binding site. Residue Ser393 participates in L-serine binding.

This sequence belongs to the class-II aminoacyl-tRNA synthetase family. Type-1 seryl-tRNA synthetase subfamily. Homodimer. The tRNA molecule binds across the dimer.

It localises to the cytoplasm. The enzyme catalyses tRNA(Ser) + L-serine + ATP = L-seryl-tRNA(Ser) + AMP + diphosphate + H(+). It carries out the reaction tRNA(Sec) + L-serine + ATP = L-seryl-tRNA(Sec) + AMP + diphosphate + H(+). Its pathway is aminoacyl-tRNA biosynthesis; selenocysteinyl-tRNA(Sec) biosynthesis; L-seryl-tRNA(Sec) from L-serine and tRNA(Sec): step 1/1. Functionally, catalyzes the attachment of serine to tRNA(Ser). Is also able to aminoacylate tRNA(Sec) with serine, to form the misacylated tRNA L-seryl-tRNA(Sec), which will be further converted into selenocysteinyl-tRNA(Sec). This Pseudoalteromonas translucida (strain TAC 125) protein is Serine--tRNA ligase.